A 205-amino-acid polypeptide reads, in one-letter code: LexA repressor (205 aa).

The H-T-H motif DNA-binding region spans 28-48; sequence RAEIAKRLGFKSANAAEEHLK. Residues Ser122 and Lys159 each act as for autocatalytic cleavage activity in the active site.

Belongs to the peptidase S24 family. Homodimer.

It catalyses the reaction Hydrolysis of Ala-|-Gly bond in repressor LexA.. In terms of biological role, represses a number of genes involved in the response to DNA damage (SOS response), including recA and lexA. In the presence of single-stranded DNA, RecA interacts with LexA causing an autocatalytic cleavage which disrupts the DNA-binding part of LexA, leading to derepression of the SOS regulon and eventually DNA repair. This is LexA repressor from Shewanella woodyi (strain ATCC 51908 / MS32).